The primary structure comprises 608 residues: Fatty acid amide hydrolase (608 aa).

Catalysis depends on charge relay system residues Lys-206 and Ser-282. 303–306 (GGGS) lines the substrate pocket. The active-site Acyl-ester intermediate is Ser-306.

It belongs to the amidase family. As to quaternary structure, forms homodimers.

The protein localises to the endoplasmic reticulum membrane. It is found in the cell membrane. It catalyses the reaction N-(9Z,12Z-octadecadienoyl)-ethanolamine + H2O = ethanolamine + (9Z,12Z)-octadecadienoate. It carries out the reaction N-hexadecanoylethanolamine + H2O = ethanolamine + hexadecanoate. The catalysed reaction is N-dodecanoylethanolamine + H2O = dodecanoate + ethanolamine. With respect to regulation, inhibited by methyl arachidonyl fluorophosphonate (MAFP). Its function is as follows. Catalyzes the hydrolysis of bioactive endogenous fatty acid amides to their corresponding acids. The hydrolysis of endogenous amidated lipids terminates their participation as lipid mediators in various signaling systems. Converts a wide range of N-acylethanolamines (NAEs) to their corresponding free fatty acids and ethanolamine. The sequence is that of Fatty acid amide hydrolase from Oryza sativa subsp. indica (Rice).